The chain runs to 364 residues: Histidinol-phosphate aminotransferase (364 aa).

Lys224 carries the N6-(pyridoxal phosphate)lysine modification.

This sequence belongs to the class-II pyridoxal-phosphate-dependent aminotransferase family. Histidinol-phosphate aminotransferase subfamily. As to quaternary structure, homodimer. Requires pyridoxal 5'-phosphate as cofactor.

It catalyses the reaction L-histidinol phosphate + 2-oxoglutarate = 3-(imidazol-4-yl)-2-oxopropyl phosphate + L-glutamate. Its pathway is amino-acid biosynthesis; L-histidine biosynthesis; L-histidine from 5-phospho-alpha-D-ribose 1-diphosphate: step 7/9. This is Histidinol-phosphate aminotransferase from Anaeromyxobacter sp. (strain Fw109-5).